A 162-amino-acid polypeptide reads, in one-letter code: Beta-lactoglobulin (162 aa).

3 disulfide bridges follow: C66/C160, C106/C119, and C106/C121.

This sequence belongs to the calycin superfamily. Lipocalin family. In terms of assembly, under physiological conditions beta-lactoglobulin exists as an equilibrium mixture of monomeric and dimeric forms. In terms of processing, alternate disulfide bonds occur in equal amounts.

It localises to the secreted. Functionally, lactoglobulin is the primary component of whey, it binds retinol and is probably involved in the transport of that molecule. The sequence is that of Beta-lactoglobulin (LGB) from Ovis aries musimon (Mouflon).